Consider the following 438-residue polypeptide: GTPase Der (438 aa).

2 EngA-type G domains span residues 4 to 168 (PIVA…PEGN) and 177 to 352 (IRIA…GNYC). Residues 10–17 (GRPNVGKS), 57–61 (DTGGI), 120–123 (NKID), 183–190 (GRPNVGKS), 230–234 (DTAGL), and 295–298 (NKWD) contribute to the GTP site. One can recognise a KH-like domain in the interval 353 to 437 (KRIKTGILND…GIKLEFRERK (85 aa)).

The protein belongs to the TRAFAC class TrmE-Era-EngA-EngB-Septin-like GTPase superfamily. EngA (Der) GTPase family. As to quaternary structure, associates with the 50S ribosomal subunit.

Its function is as follows. GTPase that plays an essential role in the late steps of ribosome biogenesis. The sequence is that of GTPase Der from Clostridium novyi (strain NT).